A 484-amino-acid chain; its full sequence is Glycogen synthase (484 aa).

K21 is a binding site for ADP-alpha-D-glucose.

It belongs to the glycosyltransferase 1 family. Bacterial/plant glycogen synthase subfamily.

The enzyme catalyses [(1-&gt;4)-alpha-D-glucosyl](n) + ADP-alpha-D-glucose = [(1-&gt;4)-alpha-D-glucosyl](n+1) + ADP + H(+). Its pathway is glycan biosynthesis; glycogen biosynthesis. Its function is as follows. Synthesizes alpha-1,4-glucan chains using ADP-glucose. This is Glycogen synthase from Pseudomonas syringae pv. tomato (strain ATCC BAA-871 / DC3000).